The primary structure comprises 159 residues: RNA pyrophosphohydrolase (159 aa).

In terms of domain architecture, Nudix hydrolase spans 6–149 (GFRPNVGIIL…KREVYRRALK (144 aa)). A Nudix box motif is present at residues 38 to 59 (GGINARETPEEALFRELNEEVG).

It belongs to the Nudix hydrolase family. RppH subfamily. A divalent metal cation is required as a cofactor.

Accelerates the degradation of transcripts by removing pyrophosphate from the 5'-end of triphosphorylated RNA, leading to a more labile monophosphorylated state that can stimulate subsequent ribonuclease cleavage. This is RNA pyrophosphohydrolase from Stutzerimonas stutzeri (strain A1501) (Pseudomonas stutzeri).